Here is a 143-residue protein sequence, read N- to C-terminus: Ribosome maturation factor RimP (143 aa).

This sequence belongs to the RimP family.

The protein resides in the cytoplasm. In terms of biological role, required for maturation of 30S ribosomal subunits. This chain is Ribosome maturation factor RimP, found in Neisseria meningitidis serogroup C (strain 053442).